A 330-amino-acid polypeptide reads, in one-letter code: MGKGILSLQQEMSLEYSEKSYQEVLKIRQESYWKRMKSFSLFEVIMHWTASLNKHTCRSYRGSFLSLEKIGLLSLDMNLQEFSLLNHNLILDAIKKVSSAKTSWTEGTKQVRAASYISLTRFLNRMTQGIVAIAQPSKQENSRTFFKTREIVKTDAMNSLQTASFLKELKKINARDWLIAQTMLQGGKRSSEVLSLEISQICFQQATISFSQLKNRQTEKRIIITYPQKFMHFLQEYIGQRRGFVFVTRSGKMVGLRQIARTFSQAGLQAAIPFKITPHVLRATAVTEYKRLGCSDSDIMKVTGHATAKMIFAYDKSSREDNASKKMALI.

The region spanning 39–124 (FSLFEVIMHW…SYISLTRFLN (86 aa)) is the Core-binding (CB) domain. The Tyr recombinase domain maps to 152–327 (VKTDAMNSLQ…SREDNASKKM (176 aa)). Catalysis depends on residues R189, K214, H279, R282, and H305. Y314 functions as the O-(3'-phospho-DNA)-tyrosine intermediate in the catalytic mechanism.

It belongs to the 'phage' integrase family.

The chain is Virulence plasmid integrase pGP8-D from Chlamydia trachomatis serovar L2 (strain ATCC VR-902B / DSM 19102 / 434/Bu).